A 226-amino-acid polypeptide reads, in one-letter code: ATP synthase F(0) complex subunit a (226 aa).

The next 6 helical transmembrane spans lie at 12–32 (PTMM…ILFP), 68–88 (WALM…LGLL), 97–117 (QLSM…ITGF), 138–158 (IPML…ALAV), 164–184 (ITAG…LMDI), and 189–209 (AFIT…VALI).

This sequence belongs to the ATPase A chain family. In terms of assembly, component of the ATP synthase complex composed at least of ATP5F1A/subunit alpha, ATP5F1B/subunit beta, ATP5MC1/subunit c (homooctomer), MT-ATP6/subunit a, MT-ATP8/subunit 8, ATP5ME/subunit e, ATP5MF/subunit f, ATP5MG/subunit g, ATP5MK/subunit k, ATP5MJ/subunit j, ATP5F1C/subunit gamma, ATP5F1D/subunit delta, ATP5F1E/subunit epsilon, ATP5PF/subunit F6, ATP5PB/subunit b, ATP5PD/subunit d, ATP5PO/subunit OSCP. ATP synthase complex consists of a soluble F(1) head domain (subunits alpha(3) and beta(3)) - the catalytic core - and a membrane F(0) domain - the membrane proton channel (subunits c, a, 8, e, f, g, k and j). These two domains are linked by a central stalk (subunits gamma, delta, and epsilon) rotating inside the F1 region and a stationary peripheral stalk (subunits F6, b, d, and OSCP). Interacts with DNAJC30; interaction is direct.

It localises to the mitochondrion inner membrane. The catalysed reaction is H(+)(in) = H(+)(out). Functionally, subunit a, of the mitochondrial membrane ATP synthase complex (F(1)F(0) ATP synthase or Complex V) that produces ATP from ADP in the presence of a proton gradient across the membrane which is generated by electron transport complexes of the respiratory chain. ATP synthase complex consist of a soluble F(1) head domain - the catalytic core - and a membrane F(1) domain - the membrane proton channel. These two domains are linked by a central stalk rotating inside the F(1) region and a stationary peripheral stalk. During catalysis, ATP synthesis in the catalytic domain of F(1) is coupled via a rotary mechanism of the central stalk subunits to proton translocation. With the subunit c (ATP5MC1), forms the proton-conducting channel in the F(0) domain, that contains two crucial half-channels (inlet and outlet) that facilitate proton movement from the mitochondrial intermembrane space (IMS) into the matrix. Protons are taken up via the inlet half-channel and released through the outlet half-channel, following a Grotthuss mechanism. This Halichoerus grypus (Gray seal) protein is ATP synthase F(0) complex subunit a.